Reading from the N-terminus, the 201-residue chain is Elongation factor Ts (201 aa).

The tract at residues 83 to 86 is involved in Mg(2+) ion dislocation from EF-Tu; the sequence is TDFV.

Belongs to the EF-Ts family.

The protein resides in the cytoplasm. Its function is as follows. Associates with the EF-Tu.GDP complex and induces the exchange of GDP to GTP. It remains bound to the aminoacyl-tRNA.EF-Tu.GTP complex up to the GTP hydrolysis stage on the ribosome. This chain is Elongation factor Ts, found in Methylacidiphilum infernorum (isolate V4) (Methylokorus infernorum (strain V4)).